A 286-amino-acid chain; its full sequence is 4-diphosphocytidyl-2-C-methyl-D-erythritol kinase (286 aa).

The active site involves lysine 13. Proline 101–serine 111 is a binding site for ATP. Aspartate 143 is a catalytic residue.

It belongs to the GHMP kinase family. IspE subfamily.

It catalyses the reaction 4-CDP-2-C-methyl-D-erythritol + ATP = 4-CDP-2-C-methyl-D-erythritol 2-phosphate + ADP + H(+). It functions in the pathway isoprenoid biosynthesis; isopentenyl diphosphate biosynthesis via DXP pathway; isopentenyl diphosphate from 1-deoxy-D-xylulose 5-phosphate: step 3/6. In terms of biological role, catalyzes the phosphorylation of the position 2 hydroxy group of 4-diphosphocytidyl-2C-methyl-D-erythritol. This is 4-diphosphocytidyl-2-C-methyl-D-erythritol kinase from Idiomarina loihiensis (strain ATCC BAA-735 / DSM 15497 / L2-TR).